The chain runs to 513 residues: 2,3-bisphosphoglycerate-independent phosphoglycerate mutase (513 aa).

Mn(2+)-binding residues include Asp14 and Ser64. Catalysis depends on Ser64, which acts as the Phosphoserine intermediate. Substrate contacts are provided by residues His125, 155–156, Arg187, Arg193, 259–262, and Lys333; these read RD and RADR. Mn(2+)-binding residues include Asp400, His404, Asp441, His442, and His460.

The protein belongs to the BPG-independent phosphoglycerate mutase family. As to quaternary structure, monomer. The cofactor is Mn(2+).

It carries out the reaction (2R)-2-phosphoglycerate = (2R)-3-phosphoglycerate. The protein operates within carbohydrate degradation; glycolysis; pyruvate from D-glyceraldehyde 3-phosphate: step 3/5. In terms of biological role, catalyzes the interconversion of 2-phosphoglycerate and 3-phosphoglycerate. The polypeptide is 2,3-bisphosphoglycerate-independent phosphoglycerate mutase (Pseudomonas fluorescens (strain ATCC BAA-477 / NRRL B-23932 / Pf-5)).